Here is a 180-residue protein sequence, read N- to C-terminus: MAVRPIRLFGDPVLRTPAEPVTDFDKELRVLIKDLIETMQDAPGVGLAAPQIGVSLRVFVYDVDGVVGHLVNPSLDLSEEQQDGDEGCLSLPGLSYPLKRAKRAVAKGFNEFGEPVILEGSDLLARCVQHETDHLDGVLFIDRLDPEQRKLAMRAIREAEWAGQTVRVKTSPHPTRGKAL.

Fe cation is bound by residues cysteine 88 and histidine 130. Glutamate 131 is a catalytic residue. Residue histidine 134 participates in Fe cation binding.

This sequence belongs to the polypeptide deformylase family. Fe(2+) is required as a cofactor.

The catalysed reaction is N-terminal N-formyl-L-methionyl-[peptide] + H2O = N-terminal L-methionyl-[peptide] + formate. Functionally, removes the formyl group from the N-terminal Met of newly synthesized proteins. Requires at least a dipeptide for an efficient rate of reaction. N-terminal L-methionine is a prerequisite for activity but the enzyme has broad specificity at other positions. The chain is Peptide deformylase from Acidothermus cellulolyticus (strain ATCC 43068 / DSM 8971 / 11B).